Reading from the N-terminus, the 64-residue chain is PYLa/PGLa B (64 aa).

The first 20 residues, 1–20 (MYKQIFLCLIIAALCATIMA), serve as a signal peptide directing secretion. Positions 21–35 (EASALADADDDDDKR) are excised as a propeptide. At L59 the chain carries Leucine amide. Positions 60–64 (GRRDS) are excised as a propeptide.

This sequence belongs to the gastrin/cholecystokinin family. Magainin subfamily. As to expression, expressed by the skin glands. Synthesized in the stomach and stored in a novel granular multinucleated cell in the gastric mucosa. Stored as active, processed peptides in large granules within the granular gland secretions of the skin.

Its subcellular location is the secreted. In terms of biological role, PGLa and PGLa-H display a broad-spectrum of antibacterial activity against a range of Gram-positive and Gram-negative bacteria. PGLa also displays antifungal activity against C.albicans ATCC 14053. PGLa-H shows moderate antibacterial activity against the multidrug-resistant methicillin-resistant S.aureus (MRSA) but exhibits very little hemolytic activity. The protein is PYLa/PGLa B (pgla-b) of Xenopus laevis (African clawed frog).